The sequence spans 396 residues: Ribosomal RNA large subunit methyltransferase I (396 aa).

The PUA domain maps to 2–79 (TSAVYLQAGR…EKEVIDQHFF (78 aa)).

The protein belongs to the methyltransferase superfamily. RlmI family.

The protein localises to the cytoplasm. It catalyses the reaction cytidine(1962) in 23S rRNA + S-adenosyl-L-methionine = 5-methylcytidine(1962) in 23S rRNA + S-adenosyl-L-homocysteine + H(+). Functionally, specifically methylates the cytosine at position 1962 (m5C1962) of 23S rRNA. The polypeptide is Ribosomal RNA large subunit methyltransferase I (Pseudoalteromonas translucida (strain TAC 125)).